We begin with the raw amino-acid sequence, 736 residues long: Microtubule-associated protein mu-2 (736 aa).

Belongs to the orthoreovirus mu-2 protein family. Interacts with protein mu-NS; in viral inclusions. Interacts with polymerase lambda-3; this interaction stimulates the ATPase activity of mu-2. It depends on a divalent metal cation as a cofactor.

Its subcellular location is the virion. It is found in the host cytoplasm. It localises to the host cytoskeleton. Its function is as follows. Minor inner capsid (core) component. Displays NTPase and RNA 5'-triphosphatase (RTPase) activities. ATP is the preferred substrate for hydrolysis. May function as a cofactor of polymerase lambda-3. Associates with microtubules and plays a role in the formation, structural organization and morphology of viral inclusions, where the assembly of cores and the replication of viral RNA occur. Together with mu-NS, recruits the other core proteins to these inclusions. The sequence is that of Microtubule-associated protein mu-2 (M1) from Mammalia (T3D).